We begin with the raw amino-acid sequence, 684 residues long: Probable metal-nicotianamine transporter YSL9 (684 aa).

Basic residues predominate over residues 1-10 (MKQERRRKRQ). A disordered region spans residues 1 to 55 (MKQERRRKRQPGPPRLELVVAHPREEEMAGLDGGGDAEEGATHARGGGGAPPPWR). 14 helical membrane passes run 58–78 (LTAR…VIVM), 82–102 (LTTG…FVVL), 130–150 (CAVA…LLGL), 174–194 (GIAW…LALV), 234–254 (VNGF…QWFY), 295–315 (LVNL…WPLI), 341–361 (FICV…IVAL), 402–422 (LAFS…PMMF), 430–450 (VVIA…GAGL), 462–482 (IALF…AGLV), 515–535 (IIAQ…TFFL), 568–588 (FSAL…FAVA), 612–632 (VPFL…LIVF), and 642–662 (AALM…LWIF).

This sequence belongs to the YSL (TC 2.A.67.2) family.

The protein localises to the membrane. Its function is as follows. May be involved in the transport of nicotianamine-chelated metals. The polypeptide is Probable metal-nicotianamine transporter YSL9 (YSL9) (Oryza sativa subsp. japonica (Rice)).